The chain runs to 353 residues: Putative glycosyltransferase TagX (353 aa).

It belongs to the glycosyltransferase 2 family.

The polypeptide is Putative glycosyltransferase TagX (tagX) (Staphylococcus aureus (strain COL)).